The chain runs to 298 residues: 4-diphosphocytidyl-2-C-methyl-D-erythritol kinase (298 aa).

Lysine 11 is a catalytic residue. 94 to 104 (PMGGGLGGGSS) is an ATP binding site. The active site involves aspartate 136.

Belongs to the GHMP kinase family. IspE subfamily.

It catalyses the reaction 4-CDP-2-C-methyl-D-erythritol + ATP = 4-CDP-2-C-methyl-D-erythritol 2-phosphate + ADP + H(+). The protein operates within isoprenoid biosynthesis; isopentenyl diphosphate biosynthesis via DXP pathway; isopentenyl diphosphate from 1-deoxy-D-xylulose 5-phosphate: step 3/6. In terms of biological role, catalyzes the phosphorylation of the position 2 hydroxy group of 4-diphosphocytidyl-2C-methyl-D-erythritol. This Chromohalobacter salexigens (strain ATCC BAA-138 / DSM 3043 / CIP 106854 / NCIMB 13768 / 1H11) protein is 4-diphosphocytidyl-2-C-methyl-D-erythritol kinase.